The chain runs to 239 residues: Putative transcriptional regulator of 2-aminoethylphosphonate degradation operons (239 aa).

One can recognise an HTH gntR-type domain in the interval 8–76 (IPQYLLIKAQ…DRRGWFVTPE (69 aa)). Residues 36-55 (ERELCAIFNTTRITIRESLA) constitute a DNA-binding region (H-T-H motif).

The sequence is that of Putative transcriptional regulator of 2-aminoethylphosphonate degradation operons (phnR) from Salmonella paratyphi A (strain ATCC 9150 / SARB42).